The sequence spans 142 residues: Putative FK506-binding protein 9-like protein (142 aa).

In terms of domain architecture, PPIase FKBP-type spans 1–49; the sequence is MDMGLREMCVGEKRTVIIPPHLGYGEAGVDGEVPGSAVLVFDIELLELV. EF-hand domains follow at residues 60-95 and 105-140; these read WNGEVSPNLFEEIDKDGNGEVLLEEFSEYIHAQVAS and DAELIVKNMFTNQDRNGDGKVTAEEFKLKDQEAKQD. Ca(2+) is bound by residues aspartate 118, asparagine 120, aspartate 122, lysine 124, and glutamate 129.

The chain is Putative FK506-binding protein 9-like protein (FKBP9P1) from Homo sapiens (Human).